The sequence spans 194 residues: Probable GTP-binding protein EngB (194 aa).

In terms of domain architecture, EngB-type G spans 22 to 194 (LFLEVAFAGR…WQELDTMLNP (173 aa)). GTP contacts are provided by residues 30-37 (GRSNVGKS), 57-61 (GCTQL), 75-78 (DLPG), 142-145 (TKAD), and 173-175 (FSS). Mg(2+) contacts are provided by S37 and T59.

Belongs to the TRAFAC class TrmE-Era-EngA-EngB-Septin-like GTPase superfamily. EngB GTPase family. Requires Mg(2+) as cofactor.

Functionally, necessary for normal cell division and for the maintenance of normal septation. The chain is Probable GTP-binding protein EngB from Desulforapulum autotrophicum (strain ATCC 43914 / DSM 3382 / VKM B-1955 / HRM2) (Desulfobacterium autotrophicum).